Consider the following 763-residue polypeptide: Sphingoid long-chain bases kinase 1 (763 aa).

Residues 34 to 81 (TGGSQQSSPIVFPEKRNKKVKASSRRGEVTNDPQVKPKPDEHRIDIGG) are disordered. A compositionally biased stretch (basic and acidic residues) spans 58–81 (RRGEVTNDPQVKPKPDEHRIDIGG). Residues 245–384 (KSAPKMLVIL…TDVFAVEWIH (140 aa)) enclose the DAGKc domain. ATP-binding positions include 255 to 257 (NPR) and threonine 287. 313-316 (GGDG) contributes to the substrate binding site. The active-site Proton donor/acceptor is the aspartate 315. Residues glutamate 320, 345–347 (GSD), and arginine 418 each bind ATP. Residues 561 to 603 (MGLTSVQDPPTRCSWGNTGGQDREDISSTVSDPGPIWDAGPKW) are disordered. 733–735 (DGE) is an ATP binding site.

In terms of tissue distribution, expressed in roots, stems, leaves and at higher levels in flowers.

Its function is as follows. Involved in the production of sphingolipid metabolites. Active on sphingosine, phytosphingosine (PHS, 4-hydroxysphinganine), D-erythro-dihydrosphingosine, D-erythro-sphingosine and trans-4, trans-8-sphingadienine, an LCB found exclusively in plants, but not on N-acetyl-dihydrosphingosine (C2-dihydroceramide) and D-threo-dihydrosphingosine. The polypeptide is Sphingoid long-chain bases kinase 1 (LCBK1) (Arabidopsis thaliana (Mouse-ear cress)).